Reading from the N-terminus, the 501-residue chain is Glutamyl-tRNA(Gln) amidotransferase subunit A (501 aa).

Catalysis depends on charge relay system residues Lys80 and Ser155. Ser179 functions as the Acyl-ester intermediate in the catalytic mechanism.

It belongs to the amidase family. GatA subfamily. Heterotrimer of A, B and C subunits.

It catalyses the reaction L-glutamyl-tRNA(Gln) + L-glutamine + ATP + H2O = L-glutaminyl-tRNA(Gln) + L-glutamate + ADP + phosphate + H(+). Its function is as follows. Allows the formation of correctly charged Gln-tRNA(Gln) through the transamidation of misacylated Glu-tRNA(Gln) in organisms which lack glutaminyl-tRNA synthetase. The reaction takes place in the presence of glutamine and ATP through an activated gamma-phospho-Glu-tRNA(Gln). The sequence is that of Glutamyl-tRNA(Gln) amidotransferase subunit A from Cupriavidus taiwanensis (strain DSM 17343 / BCRC 17206 / CCUG 44338 / CIP 107171 / LMG 19424 / R1) (Ralstonia taiwanensis (strain LMG 19424)).